The chain runs to 38 residues: L-amino-acid oxidase (38 aa).

It belongs to the flavin monoamine oxidase family. FIG1 subfamily. In terms of assembly, homodimer; non-covalently linked. FAD serves as cofactor. In terms of processing, N-glycosylated. Expressed by the venom gland.

The protein resides in the secreted. The enzyme catalyses an L-alpha-amino acid + O2 + H2O = a 2-oxocarboxylate + H2O2 + NH4(+). It catalyses the reaction L-leucine + O2 + H2O = 4-methyl-2-oxopentanoate + H2O2 + NH4(+). The catalysed reaction is L-phenylalanine + O2 + H2O = 3-phenylpyruvate + H2O2 + NH4(+). It carries out the reaction L-tryptophan + O2 + H2O = indole-3-pyruvate + H2O2 + NH4(+). The enzyme catalyses L-methionine + O2 + H2O = 4-methylsulfanyl-2-oxobutanoate + H2O2 + NH4(+). It catalyses the reaction L-arginine + O2 + H2O = 5-guanidino-2-oxopentanoate + H2O2 + NH4(+). The catalysed reaction is L-2-aminohexanoate + O2 + H2O = 2-oxohexanoate + H2O2 + NH4(+). It carries out the reaction L-2-aminopentanoate + O2 + H2O = 2-oxopentanoate + H2O2 + NH4(+). The enzyme catalyses L-tyrosine + O2 + H2O = 3-(4-hydroxyphenyl)pyruvate + H2O2 + NH4(+). Catalyzes an oxidative deamination of predominantly hydrophobic and aromatic L-amino acids, thus producing hydrogen peroxide that may contribute to the diverse toxic effects of this enzyme. Is very active against L-Phe and L-Tyr, moderately active against L-Trp, L-Met, L-Leu, L-norleucine (L-2-aminohexanoate), L-Arg and L-norvaline (L-2-aminopentanoate), and slightly active against L-His, L-cystine, and L-Ile. L-Gln, L-Lys, L-Asn, L-ornithine, L-Ala and L-Val are oxidized very slowly. Exhibits diverse biological activities, such as hemorrhage, hemolysis, edema, apoptosis of vascular endothelial cells or tumor cell lines, antibacterial and antiparasitic activities. This protein inhibits both agonist- and shear stress-induced platelet aggregation (SIPA). Effects of snake L-amino oxidases on platelets are controversial, since they either induce aggregation or inhibit agonist-induced aggregation. These different effects are probably due to different experimental conditions. The protein is L-amino-acid oxidase of Naja kaouthia (Monocled cobra).